A 561-amino-acid chain; its full sequence is Cation diffusion facilitator family protein 1 (561 aa).

Positions 1–20 (MEVTMEDRSVKADKADRDDN) are enriched in basic and acidic residues. Residues 1–26 (MEVTMEDRSVKADKADRDDNNTTSTE) form a disordered region. At 1-112 (MEVTMEDRSV…SESVKGVSRS (112 aa)) the chain is on the cytoplasmic side. Residues 113–133 (LIIQIGMTVIFCALEFITGVV) form a helical membrane-spanning segment. At 134–136 (CSS) the chain is on the extracellular side. Residues 137–157 (IAMLADSYHMAADVMALIVAF) traverse the membrane as a helical segment. Residues 158 to 176 (TCIKIATRPSTRLGYGWVR) lie on the Cytoplasmic side of the membrane. Residues 177-197 (AETLGGFFNGIFMCTVCVLVF) form a helical membrane-spanning segment. Topologically, residues 198-215 (QEAVGRIINVHMITHPLQ) are extracellular. A helical transmembrane segment spans residues 216–236 (VLVIGFIGLLINLFGMFNLSG). The Cytoplasmic segment spans residues 237–391 (HGHSHGGGSH…NVNIHGVWLH (155 aa)). The segment at 240–304 (SHGGGSHGHS…HTRLNGKFRS (65 aa)) is disordered. The 6 X 2 AA approximate repeats of H-G stretch occupies residues 246 to 270 (HGHSHGGSHGHSHNNKKTKKNDGHG). Residues 247–264 (GHSHGGSHGHSHNNKKTK) are compositionally biased toward basic residues. A helical membrane pass occupies residues 392-412 (LLSDAFGSVIVMISAGFVYFL). Residues 413 to 420 (PTWKIAAY) are Extracellular-facing. Residues 421–441 (LDPILSISLASIMGFTAVVLV) form a helical membrane-spanning segment. At 442–561 (KTSGEKLLKQ…SVSTENEITE (120 aa)) the chain is on the cytoplasmic side.

It belongs to the cation diffusion facilitator (CDF) transporter (TC 2.A.4) family. SLC30A subfamily. Interacts with lin-45 in a zinc-dependent manner. In terms of tissue distribution, expressed in intestinal cells. Expressed in the vulva.

The protein resides in the basolateral cell membrane. Its function is as follows. Involved in the regulation of Pn.p cell fate determination. Involved in zinc metabolism and the decrease of the cytosolic zinc concentration which is thought to modulate Ras signaling. Involved in zinc transport from the intestinal lumen to the pseudocoelum. The polypeptide is Cation diffusion facilitator family protein 1 (cdf-1) (Caenorhabditis elegans).